The primary structure comprises 45 residues: Photosystem I reaction center subunit IX 1 (45 aa).

The helical transmembrane segment at 9-29 (WFRSAPVVATIWITLTAGIIV) threads the bilayer.

Belongs to the PsaJ family.

Its subcellular location is the cellular thylakoid membrane. In terms of biological role, may help in the organization of the PsaE and PsaF subunits. The protein is Photosystem I reaction center subunit IX 1 of Prochlorococcus marinus (strain NATL1A).